The following is a 502-amino-acid chain: MAFKPKIPIALLLLTSLLAICAGLALAMQDPELKQCKHQCRHQRQFDEQEKEHCQRSCDEYHIEKKARERAERRRSEEGSSREEGYEEEELGGEREEENPYVFEDEDFETRVRTDEGRIQVLEKFTKRSKLLRGIENFRVAILEANPQTFISPAHFDAELVVFVAKGRATITTVREEKRENFNVEQGDIMRIPAGTPVYLINRDENEKLYIVKILRPVSVPGHFEAFHGSGGEDPESFYRAFSWEVLEAALKTRRDQLEKLFGKQTQGVIIKASKEQIRSMSKHEETTPRIWPFGGDSTHPFNLFHKRPSQSNQFGRLFETDPKECKQLQDLDLMVSFANITKGSMAGPYYNSRATKISVVIEGEGYFEMACPHLSSSGSRGQREGSGSSRRRSRSGPSYQQIRGRLRPGMVFVAPAGHPVAVIASRNKNLQVLCFDVNAQGNIRFPLAGKNNIVNEFEKEAKELAFNFPAREVEKIFRNQDQEFFFPGPSRQPEEGGRAFE.

The N-terminal stretch at 1–27 is a signal peptide; sequence MAFKPKIPIALLLLTSLLAICAGLALA. Basic and acidic residues predominate over residues 67–84; the sequence is ARERAERRRSEEGSSREE. Residues 67 to 100 form a disordered region; that stretch reads ARERAERRRSEEGSSREEGYEEEELGGEREEENP. The segment covering 85–100 has biased composition (acidic residues); it reads GYEEEELGGEREEENP. Cupin type-1 domains are found at residues 101-259 and 302-475; these read YVFE…DQLE and FNLF…REVE. N-linked (GlcNAc...) asparagine glycosylation is present at Asn340. The disordered stretch occupies residues 374–401; it reads HLSSSGSRGQREGSGSSRRRSRSGPSYQ. Over residues 376-389 the composition is skewed to low complexity; sequence SSSGSRGQREGSGS.

Belongs to the 7S seed storage protein family. Homotrimer. N-glycosylated; paucimannose-type structures containing xylose. Expressed in seed (at protein level).

Seed storage protein. The sequence is that of Vicilin Jug r 6.0101 from Juglans regia (English walnut).